The following is an 82-amino-acid chain: MPKKAEKPASFETALKELEQIVTRLESGELPLEQALNEFEQGVQLARQGQKTLQQAEQRVQILLNDTPDAPLAPFAPENDAL.

Belongs to the XseB family. In terms of assembly, heterooligomer composed of large and small subunits.

The protein resides in the cytoplasm. The enzyme catalyses Exonucleolytic cleavage in either 5'- to 3'- or 3'- to 5'-direction to yield nucleoside 5'-phosphates.. Functionally, bidirectionally degrades single-stranded DNA into large acid-insoluble oligonucleotides, which are then degraded further into small acid-soluble oligonucleotides. The chain is Exodeoxyribonuclease 7 small subunit from Sodalis glossinidius (strain morsitans).